Reading from the N-terminus, the 333-residue chain is tRNA U34 carboxymethyltransferase (333 aa).

Residues Lys-97, Trp-111, Lys-116, Gly-136, 158-160 (DPS), 189-190 (IE), Met-205, Tyr-209, and Arg-324 contribute to the carboxy-S-adenosyl-L-methionine site.

Belongs to the class I-like SAM-binding methyltransferase superfamily. CmoB family. In terms of assembly, homotetramer.

The catalysed reaction is carboxy-S-adenosyl-L-methionine + 5-hydroxyuridine(34) in tRNA = 5-carboxymethoxyuridine(34) in tRNA + S-adenosyl-L-homocysteine + H(+). Its function is as follows. Catalyzes carboxymethyl transfer from carboxy-S-adenosyl-L-methionine (Cx-SAM) to 5-hydroxyuridine (ho5U) to form 5-carboxymethoxyuridine (cmo5U) at position 34 in tRNAs. In Chromohalobacter salexigens (strain ATCC BAA-138 / DSM 3043 / CIP 106854 / NCIMB 13768 / 1H11), this protein is tRNA U34 carboxymethyltransferase.